A 311-amino-acid chain; its full sequence is Olfactory receptor 5P3 (311 aa).

Over methionine 1–alanine 25 the chain is Extracellular. The N-linked (GlcNAc...) asparagine glycan is linked to asparagine 5. A helical membrane pass occupies residues isoleucine 26–isoleucine 46. At valine 47–histidine 54 the chain is on the cytoplasmic side. Residues leucine 55–serine 75 form a helical membrane-spanning segment. The Extracellular portion of the chain corresponds to serine 76–alanine 99. Cysteine 97 and cysteine 189 are joined by a disulfide. A helical transmembrane segment spans residues glutamine 100–tyrosine 120. The Cytoplasmic segment spans residues aspartate 121–glycine 139. Residues valine 140–isoleucine 160 traverse the membrane as a helical segment. Residues glycine 161 to glutamate 196 are Extracellular-facing. Residues isoleucine 197 to serine 217 form a helical membrane-spanning segment. Topologically, residues tyrosine 218–alanine 237 are cytoplasmic. A helical transmembrane segment spans residues phenylalanine 238–isoleucine 258. At tyrosine 259 to asparagine 271 the chain is on the extracellular side. A helical membrane pass occupies residues lysine 272–leucine 292. The Cytoplasmic segment spans residues arginine 293–serine 311.

This sequence belongs to the G-protein coupled receptor 1 family. As to expression, expressed in the tongue.

It localises to the cell membrane. Odorant receptor (Potential). May be involved in taste perception. The sequence is that of Olfactory receptor 5P3 (OR5P3) from Homo sapiens (Human).